We begin with the raw amino-acid sequence, 476 residues long: ATP synthase subunit beta (476 aa).

An ATP-binding site is contributed by 154-161 (GGAGVGKT).

This sequence belongs to the ATPase alpha/beta chains family. F-type ATPases have 2 components, CF(1) - the catalytic core - and CF(0) - the membrane proton channel. CF(1) has five subunits: alpha(3), beta(3), gamma(1), delta(1), epsilon(1). CF(0) has four main subunits: a(1), b(1), b'(1) and c(9-12).

Its subcellular location is the cell inner membrane. The enzyme catalyses ATP + H2O + 4 H(+)(in) = ADP + phosphate + 5 H(+)(out). Its function is as follows. Produces ATP from ADP in the presence of a proton gradient across the membrane. The catalytic sites are hosted primarily by the beta subunits. The polypeptide is ATP synthase subunit beta (Rhodopseudomonas palustris (strain ATCC BAA-98 / CGA009)).